The primary structure comprises 190 residues: MLYLASRSPRRQELLQRLDVPFQTLQLDVPELRAADESPDQYVQRVALEKAHAGLALVQAADPDAIVLGSDTEVVLGERVFGKPVDVDDAIAMLRELSGRTHQVLTAVVLVCAQRAPARALVVSEVAFDTLDDAQIAAYAACGEPMGKAGAYAIQGRAERFIRHLSGSYSGVMGLPLYHTSQLLTAFGAH.

The Proton acceptor role is filled by Asp-71.

Belongs to the Maf family. YhdE subfamily. The cofactor is a divalent metal cation.

The protein resides in the cytoplasm. It carries out the reaction dTTP + H2O = dTMP + diphosphate + H(+). The catalysed reaction is UTP + H2O = UMP + diphosphate + H(+). In terms of biological role, nucleoside triphosphate pyrophosphatase that hydrolyzes dTTP and UTP. May have a dual role in cell division arrest and in preventing the incorporation of modified nucleotides into cellular nucleic acids. The polypeptide is dTTP/UTP pyrophosphatase (Xanthomonas axonopodis pv. citri (strain 306)).